The sequence spans 360 residues: A-type ATP synthase subunit C (360 aa).

Positions 1 to 23 (MRLLERLWGKKPSRKSDKKKKGT) are disordered. Residues 9–22 (GKKPSRKSDKKKKG) are compositionally biased toward basic residues.

It belongs to the V-ATPase V0D/AC39 subunit family. As to quaternary structure, has multiple subunits with at least A(3), B(3), C, D, E, F, H, I and proteolipid K(x).

It localises to the cell membrane. Its function is as follows. Component of the A-type ATP synthase that produces ATP from ADP in the presence of a proton gradient across the membrane. This is A-type ATP synthase subunit C from Methanosarcina acetivorans (strain ATCC 35395 / DSM 2834 / JCM 12185 / C2A).